The following is a 216-amino-acid chain: ATP-dependent Clp protease proteolytic subunit (216 aa).

The active-site Nucleophile is the Ser101. His126 is a catalytic residue.

It belongs to the peptidase S14 family. Component of the chloroplastic Clp protease core complex.

The protein resides in the plastid. It is found in the chloroplast stroma. The catalysed reaction is Hydrolysis of proteins to small peptides in the presence of ATP and magnesium. alpha-casein is the usual test substrate. In the absence of ATP, only oligopeptides shorter than five residues are hydrolyzed (such as succinyl-Leu-Tyr-|-NHMec, and Leu-Tyr-Leu-|-Tyr-Trp, in which cleavage of the -Tyr-|-Leu- and -Tyr-|-Trp bonds also occurs).. In terms of biological role, cleaves peptides in various proteins in a process that requires ATP hydrolysis. Has a chymotrypsin-like activity. Plays a major role in the degradation of misfolded proteins. The sequence is that of ATP-dependent Clp protease proteolytic subunit from Triticum aestivum (Wheat).